The chain runs to 82 residues: UPF0235 protein Pden_2174 (82 aa).

The protein belongs to the UPF0235 family.

This chain is UPF0235 protein Pden_2174, found in Paracoccus denitrificans (strain Pd 1222).